Consider the following 376-residue polypeptide: Succinyl-diaminopimelate desuccinylase (376 aa).

Histidine 66 provides a ligand contact to Zn(2+). Residue aspartate 68 is part of the active site. Aspartate 99 contributes to the Zn(2+) binding site. Glutamate 133 serves as the catalytic Proton acceptor. Zn(2+) is bound by residues glutamate 134, glutamate 162, and histidine 348.

Belongs to the peptidase M20A family. DapE subfamily. Homodimer. The cofactor is Zn(2+). It depends on Co(2+) as a cofactor.

It catalyses the reaction N-succinyl-(2S,6S)-2,6-diaminopimelate + H2O = (2S,6S)-2,6-diaminopimelate + succinate. It participates in amino-acid biosynthesis; L-lysine biosynthesis via DAP pathway; LL-2,6-diaminopimelate from (S)-tetrahydrodipicolinate (succinylase route): step 3/3. Catalyzes the hydrolysis of N-succinyl-L,L-diaminopimelic acid (SDAP), forming succinate and LL-2,6-diaminopimelate (DAP), an intermediate involved in the bacterial biosynthesis of lysine and meso-diaminopimelic acid, an essential component of bacterial cell walls. The polypeptide is Succinyl-diaminopimelate desuccinylase (Xanthomonas oryzae pv. oryzae (strain MAFF 311018)).